Consider the following 304-residue polypeptide: Non-specific ribonucleoside hydrolase RihC (304 aa).

Residue His-233 is part of the active site.

The protein belongs to the IUNH family. RihC subfamily.

Hydrolyzes both purine and pyrimidine ribonucleosides with a broad-substrate specificity. In Shigella flexneri serotype 5b (strain 8401), this protein is Non-specific ribonucleoside hydrolase RihC.